The chain runs to 124 residues: Small ribosomal subunit protein uS12 (124 aa).

The tract at residues 1–32 (MPTIQQLVRKGRQAKTTKTKTPALKGSPQRRG) is disordered. The segment covering 9 to 18 (RKGRQAKTTK) has biased composition (basic residues). Position 89 is a 3-methylthioaspartic acid (D89). A disordered region spans residues 105–124 (QGVRNRKQARSRYGAKKEKS). Positions 108-118 (RNRKQARSRYG) are enriched in basic residues.

Belongs to the universal ribosomal protein uS12 family. Part of the 30S ribosomal subunit. Contacts proteins S8 and S17. May interact with IF1 in the 30S initiation complex.

Functionally, with S4 and S5 plays an important role in translational accuracy. Its function is as follows. Interacts with and stabilizes bases of the 16S rRNA that are involved in tRNA selection in the A site and with the mRNA backbone. Located at the interface of the 30S and 50S subunits, it traverses the body of the 30S subunit contacting proteins on the other side and probably holding the rRNA structure together. The combined cluster of proteins S8, S12 and S17 appears to hold together the shoulder and platform of the 30S subunit. This is Small ribosomal subunit protein uS12 from Salinispora arenicola (strain CNS-205).